The chain runs to 527 residues: Cytochrome P450 monooxygenase olcJ (527 aa).

Residues 21–43 (GLLTRYNVFMAISITVTALYLIH) traverse the membrane as a helical segment. Cys-464 contributes to the heme binding site.

The protein belongs to the cytochrome P450 family. Heme is required as a cofactor.

It is found in the membrane. Its pathway is secondary metabolite biosynthesis; terpenoid biosynthesis. Its function is as follows. Cytochrome P450 monooxygenase; part of the gene cluster that mediates the biosynthesis of 15-deoxyoxalicine B. The first step of the pathway is the synthesis of nicotinyl-CoA from nicotinic acid by the nicotinic acid-CoA ligase olcI. Nicotinyl-CoA is then a substrate of polyketide synthase olcA to produce 4-hydroxy-6-(3-pyridinyl)-2H-pyran-2-one (HPPO) which is further prenylated by the polyprenyl transferase olcH to yield geranylgeranyl-HPPO. Geranylgeranyl pyrophosphate is provided by the cluster-specific geranylgeranyl pyrophosphate synthase olcC. The FAD-dependent monooxygenase olcE catalyzes the epoxidation of geranylgeranyl-HPPO and the terpene cyclase olcD catalyzes the cyclization of the terpenoid component, resulting in the formation of the tricyclic terpene moiety seen in predecaturin E. The cytochrome P450 monooxygenase then catalyzes the allylic oxidation of predecaturin E, which is followed by spirocylization with concomitant loss of one molecule of water to form decaturin E. Decaturin E is the substrate of the cytochrome P450 monooxygenase olcJ which hydroxylates it at the C-29 position to form decaturin F. The short-chain dehydrogenase/reductase olcF may catalyze the oxidation of decaturin F to generate the 29-hydroxyl-27-one intermediate, and subsequent hemiacetal formation probably leads to the formation of decaturin C. The dioxygenase olcK may be a peroxisomal enzyme that catalyzes the hydroxylation of decaturin C into decaturin A once decaturin C is shuttled into the peroxisome by the MFS transporter olcL. Finally the cytochrome P450 monooxygenase olcB catalyzes the oxidative rearrangement to yield 15-deoxyoxalicine B. In the absence of olcJ, decaturin E may be shunted to a pathway in which it is oxidized to a ketone, possibly by olcF, to form decaturin D, which undergoes further allylic oxidation to yield decaturin G. Moreover, in the absence of oclK or oclL, oclB can convert decaturin C into 15-deoxyoxalicine A. The sequence is that of Cytochrome P450 monooxygenase olcJ from Penicillium canescens.